Consider the following 336-residue polypeptide: MKIALDAMGGDYAPIETVKGALEAIKESNISVVLVGKEEEIKKILQDYHYNESKIEIVHAEEVIEMHEHPAFAVKEKEDSSIVKAIKLLKEKKVDGVVSAGNTGAVMSSALLYLGRIRGIKRPAISTLIPTLTQIPSIILDIGANVDCKKEYLEQFALMGKVYMEEIFNVKNPKIALLNIGEEEGKGNQLVQETYTLLKNNPLFNFIGNVEGKDLFKGTANVIVCDGFVGNVAIKTAEGVAETLFDLLSSEIKSSLWSIILGLLLKPKFKNVKKKLDYSEFGGAPLLGVDGTVIISHGRSKAKAIKNALKVAEKMVKLEVNKKILEGLNKITDRGD.

The protein belongs to the PlsX family. As to quaternary structure, homodimer. Probably interacts with PlsY.

It is found in the cytoplasm. It catalyses the reaction a fatty acyl-[ACP] + phosphate = an acyl phosphate + holo-[ACP]. Its pathway is lipid metabolism; phospholipid metabolism. Its function is as follows. Catalyzes the reversible formation of acyl-phosphate (acyl-PO(4)) from acyl-[acyl-carrier-protein] (acyl-ACP). This enzyme utilizes acyl-ACP as fatty acyl donor, but not acyl-CoA. This Dictyoglomus turgidum (strain DSM 6724 / Z-1310) protein is Phosphate acyltransferase.